Reading from the N-terminus, the 614-residue chain is Vitamin B12 transporter BtuB (614 aa).

The N-terminal stretch at 1–20 (MIKKASLLTACSVTAFSAWA) is a signal peptide. The TonB box signature appears at 26–33 (DTLVVTAN). In terms of domain architecture, TBDR plug spans 38 to 152 (PRSTVLAPTT…IGGVVNIITT (115 aa)). Cyanocob(III)alamin is bound by residues Leu83, Ser85, Asn92, and 110–111 (VS). Positions 155-614 (EPGTEISAGW…EYTLSGSYTF (460 aa)) constitute a TBDR beta-barrel domain. A run of 3 beta stranded transmembrane segments spans residues 158–165 (TEISAGWG), 169–178 (YQNYDVSTQQ), and 184–195 (TRVTLLGDYAHT). Ca(2+) is bound by residues Asp199, Gln211, Asp213, and Asp215. The next 2 beta stranded transmembrane spans lie at 217 to 227 (FLSKTLYGALE) and 232 to 248 (DAWSGFVRGYGYDNRTN). 2 residues coordinate Ca(2+): Tyr249 and Asp250. Cyanocob(III)alamin is bound at residue Ala251. Asp261 lines the Ca(2+) pocket. 14 beta stranded membrane passes run 263–277 (RKLYSQSWDAGLRYN), 279–296 (ELIKSQLITSYSHSKDYN), 309–325 (TLDEMKQYTVQWANNVI), 328–337 (HGSIGAGVDW), 353–369 (YDQRNTGIYLTGLQQVG), 371–381 (FTFEGAARSDD), 385–400 (FGRHGTWQTSAGWEFI), 403–417 (YRFIASYGTSYKAPN), 434–443 (KSKQWEGAFE), 449–458 (VNWRISGYRN), 473–490 (YYNEGKARIKGVEATANF), 494–509 (PLTHTVSYDYVDARNA), 517–529 (RRAKQQVKYQLDW), and 535–550 (DWGITYQYLGTRYDKD). Thr309 is a binding site for cyanocob(III)alamin. Arg517 serves as a coordination point for cyanocob(III)alamin. Cyanocob(III)alamin is bound at residue Tyr551. Transmembrane regions (beta stranded) follow at residues 558 to 572 (TVKMGGVSLWDLAVA), 585 to 596 (IANLFDKDYETV), and 602 to 614 (AGREYTLSGSYTF). The TonB C-terminal box motif lies at 597-614 (YGYQTAGREYTLSGSYTF).

It belongs to the TonB-dependent receptor family. BtuB (TC 1.B.14.3.1) subfamily.

The protein localises to the cell outer membrane. Functionally, involved in the active translocation of vitamin B12 (cyanocobalamin) across the outer membrane to the periplasmic space. It derives its energy for transport by interacting with the trans-periplasmic membrane protein TonB. This chain is Vitamin B12 transporter BtuB, found in Escherichia coli O9:H4 (strain HS).